Reading from the N-terminus, the 329-residue chain is Biotin synthase (329 aa).

One can recognise a Radical SAM core domain in the interval 36–260 (GEIQLCTLLS…VAVARITMPK (225 aa)). The [4Fe-4S] cluster site is built by cysteine 51, cysteine 55, and cysteine 58. [2Fe-2S] cluster contacts are provided by cysteine 95, cysteine 126, cysteine 186, and arginine 264.

It belongs to the radical SAM superfamily. Biotin synthase family. As to quaternary structure, homodimer. The cofactor is [4Fe-4S] cluster. [2Fe-2S] cluster is required as a cofactor.

The catalysed reaction is (4R,5S)-dethiobiotin + (sulfur carrier)-SH + 2 reduced [2Fe-2S]-[ferredoxin] + 2 S-adenosyl-L-methionine = (sulfur carrier)-H + biotin + 2 5'-deoxyadenosine + 2 L-methionine + 2 oxidized [2Fe-2S]-[ferredoxin]. It participates in cofactor biosynthesis; biotin biosynthesis; biotin from 7,8-diaminononanoate: step 2/2. Its function is as follows. Catalyzes the conversion of dethiobiotin (DTB) to biotin by the insertion of a sulfur atom into dethiobiotin via a radical-based mechanism. This is Biotin synthase from Sphingopyxis alaskensis (strain DSM 13593 / LMG 18877 / RB2256) (Sphingomonas alaskensis).